The following is a 383-amino-acid chain: GA-binding protein subunit beta-1 (383 aa).

Ser2 bears the N-acetylserine mark. ANK repeat units follow at residues 5-34 (DLGK…PFTT) and 37-66 (LGTS…SRDA). Residue Lys69 is modified to N6-acetyllysine. 3 ANK repeats span residues 70-99 (VDRT…DVNA), 103-132 (LKMT…DVHT), and 136-166 (FCKT…QINT). N6-acetyllysine occurs at positions 340 and 369.

As to quaternary structure, heterotetramer of two alpha and two beta subunits. Interacts with HCFC1, causing repression of transcriptional activity. Acetylated by EP300/p300. Deacetylated by SIRT7, promoting heterotetramerization and activity.

Its subcellular location is the nucleus. Its function is as follows. Transcription factor capable of interacting with purine rich repeats (GA repeats). Acts as a master regulator of nuclear-encoded mitochondrial genes. The protein is GA-binding protein subunit beta-1 (GABPB1) of Bos taurus (Bovine).